The following is a 245-amino-acid chain: Probable phosphatase YcdX (245 aa).

The Zn(2+) site is built by His-7, His-9, His-15, His-40, Glu-73, His-101, His-131, Asp-192, and His-194.

It belongs to the PHP family. As to quaternary structure, homotrimer. Zn(2+) is required as a cofactor.

The protein is Probable phosphatase YcdX of Salmonella heidelberg (strain SL476).